Here is a 266-residue protein sequence, read N- to C-terminus: Tryptophan synthase alpha chain (266 aa).

Catalysis depends on proton acceptor residues glutamate 49 and aspartate 60.

Belongs to the TrpA family. In terms of assembly, tetramer of two alpha and two beta chains.

It catalyses the reaction (1S,2R)-1-C-(indol-3-yl)glycerol 3-phosphate + L-serine = D-glyceraldehyde 3-phosphate + L-tryptophan + H2O. Its pathway is amino-acid biosynthesis; L-tryptophan biosynthesis; L-tryptophan from chorismate: step 5/5. The alpha subunit is responsible for the aldol cleavage of indoleglycerol phosphate to indole and glyceraldehyde 3-phosphate. In Thioalkalivibrio sulfidiphilus (strain HL-EbGR7), this protein is Tryptophan synthase alpha chain.